A 172-amino-acid polypeptide reads, in one-letter code: Co-chaperone protein HscB homolog (172 aa).

One can recognise a J domain in the interval 2–74; it reads NHFELFGLVE…LRRAEYLLSL (73 aa).

The protein belongs to the HscB family. In terms of assembly, interacts with HscA and stimulates its ATPase activity.

Co-chaperone involved in the maturation of iron-sulfur cluster-containing proteins. Seems to help targeting proteins to be folded toward HscA. This chain is Co-chaperone protein HscB homolog, found in Aeromonas salmonicida (strain A449).